The primary structure comprises 151 residues: Protein NrdI (151 aa).

The protein belongs to the NrdI family.

Its function is as follows. Probably involved in ribonucleotide reductase function. This chain is Protein NrdI, found in Mesoplasma florum (strain ATCC 33453 / NBRC 100688 / NCTC 11704 / L1) (Acholeplasma florum).